The primary structure comprises 291 residues: ATP synthase gamma chain (291 aa).

This sequence belongs to the ATPase gamma chain family. F-type ATPases have 2 components, CF(1) - the catalytic core - and CF(0) - the membrane proton channel. CF(1) has five subunits: alpha(3), beta(3), gamma(1), delta(1), epsilon(1). CF(0) has three main subunits: a, b and c.

Its subcellular location is the cell inner membrane. Produces ATP from ADP in the presence of a proton gradient across the membrane. The gamma chain is believed to be important in regulating ATPase activity and the flow of protons through the CF(0) complex. In Neisseria meningitidis serogroup C (strain 053442), this protein is ATP synthase gamma chain.